A 559-amino-acid chain; its full sequence is Membrane protein insertase YidC (559 aa).

The chain crosses the membrane as a helical span at residues 6–26 (TVLWMIFSFSLLLLWNNWQIH). Residues 34–80 (GGPSPEQNAPATANNQAATNPASNTPAVPNAPAATSAPSSVPGSTAP) form a disordered region. Low complexity predominate over residues 42–80 (APATANNQAATNPASNTPAVPNAPAATSAPSSVPGSTAP). 4 helical membrane-spanning segments follow: residues 367–387 (LLGN…AVFY), 441–461 (LPMV…LASV), 480–500 (PYFI…KLNP), and 510–530 (VMMV…AGLV).

Belongs to the OXA1/ALB3/YidC family. Type 1 subfamily. As to quaternary structure, interacts with the Sec translocase complex via SecD. Specifically interacts with transmembrane segments of nascent integral membrane proteins during membrane integration.

It is found in the cell inner membrane. Functionally, required for the insertion and/or proper folding and/or complex formation of integral membrane proteins into the membrane. Involved in integration of membrane proteins that insert both dependently and independently of the Sec translocase complex, as well as at least some lipoproteins. Aids folding of multispanning membrane proteins. The protein is Membrane protein insertase YidC of Bordetella avium (strain 197N).